A 281-amino-acid chain; its full sequence is Cell division protein DivIB (281 aa).

Residues 1–36 form a disordered region; the sequence is MARKRITRRDPEEELSKFLRHEPGQGQETRKLSSQL. Topologically, residues 1–46 are cytoplasmic; the sequence is MARKRITRRDPEEELSKFLRHEPGQGQETRKLSSQLTSLKKERRRG. Residues 8 to 31 show a composition bias toward basic and acidic residues; sequence RRDPEEELSKFLRHEPGQGQETRK. Residues 47–69 form a helical membrane-spanning segment; that stretch reads LLTRLGSIMAVCLLAIAFLTYYV. The Extracellular portion of the chain corresponds to 70–281; sequence SPLADVSTVR…SAEKKAYGLS (212 aa). The 72-residue stretch at 73-144 folds into the POTRA domain; that stretch reads ADVSTVRVLG…NTLNMQVHER (72 aa).

Belongs to the FtsQ/DivIB family. DivIB subfamily.

It is found in the cell membrane. Functionally, cell division protein that may be involved in stabilizing or promoting the assembly of the division complex. This Lactobacillus delbrueckii subsp. bulgaricus (strain ATCC 11842 / DSM 20081 / BCRC 10696 / JCM 1002 / NBRC 13953 / NCIMB 11778 / NCTC 12712 / WDCM 00102 / Lb 14) protein is Cell division protein DivIB.